The following is a 190-amino-acid chain: RNA pyrophosphohydrolase (190 aa).

A Nudix hydrolase domain is found at Gly-6–Asn-149. The Nudix box motif lies at Gly-38–Gly-59. The segment at Gln-167–Gly-190 is disordered.

This sequence belongs to the Nudix hydrolase family. RppH subfamily. A divalent metal cation serves as cofactor.

Accelerates the degradation of transcripts by removing pyrophosphate from the 5'-end of triphosphorylated RNA, leading to a more labile monophosphorylated state that can stimulate subsequent ribonuclease cleavage. This Bordetella pertussis (strain Tohama I / ATCC BAA-589 / NCTC 13251) protein is RNA pyrophosphohydrolase.